Consider the following 600-residue polypeptide: Probable pectin methyltransferase QUA3 (600 aa).

Over 1–18 (MGHVNLPASKRGNPRQWR) the chain is Cytoplasmic. A helical; Signal-anchor for type II membrane protein membrane pass occupies residues 19-39 (LLDIVTAAFFGIVLLFFILLF). Residues 40 to 600 (TPLGDSMAAS…SLWKLPSNSH (561 aa)) lie on the Lumenal side of the membrane. N-linked (GlcNAc...) asparagine glycosylation occurs at asparagine 283.

Belongs to the methyltransferase superfamily. As to expression, highly expressed and abundant in suspension-cultured cells, but low levels in seedlings.

Its subcellular location is the golgi apparatus membrane. It participates in glycan metabolism; pectin biosynthesis. S-adenosyl-L-methionine (SAM)-dependent methyltransferase (MTase) which mediates the methylesterification of the pectin homogalacturonan (HG) and thus regulates cell wall biosynthesis, at least in suspension-cultured cells. The chain is Probable pectin methyltransferase QUA3 from Arabidopsis thaliana (Mouse-ear cress).